The chain runs to 160 residues: Transcription elongation factor GreA (160 aa).

Positions 2–30 (SEKTYPMTLAEKEQLEQELEELKLVRRPE) form a coiled coil.

Belongs to the GreA/GreB family.

Functionally, necessary for efficient RNA polymerase transcription elongation past template-encoded arresting sites. The arresting sites in DNA have the property of trapping a certain fraction of elongating RNA polymerases that pass through, resulting in locked ternary complexes. Cleavage of the nascent transcript by cleavage factors such as GreA or GreB allows the resumption of elongation from the new 3'terminus. GreA releases sequences of 2 to 3 nucleotides. This is Transcription elongation factor GreA from Streptococcus mutans serotype c (strain ATCC 700610 / UA159).